The primary structure comprises 103 residues: Putative double-stranded DNA mimic protein APJL_1366 (103 aa).

The protein belongs to the putative dsDNA mimic protein family.

In terms of biological role, may act as a double-stranded DNA (dsDNA) mimic. Probably regulates the activity of a dsDNA-binding protein. In Actinobacillus pleuropneumoniae serotype 3 (strain JL03), this protein is Putative double-stranded DNA mimic protein APJL_1366.